The primary structure comprises 177 residues: MKAKGELKEYEVIGRKLPSESEPKPPLYKMRIFSPDQIVAKSRFWYFLRQLKKFKKTTGEIVSIREIPEKSPVKIKNFGIWLRYESRSGVHNMYREYRDLSVGGAVTQCYRDMGARHRARAHSIQIIKVEVIKASACRRPQVKQFHNSTIRFPLPKRVHHHKRLNTFAYKRPSTYFL.

Belongs to the eukaryotic ribosomal protein eL20 family.

This Spodoptera frugiperda (Fall armyworm) protein is Large ribosomal subunit protein eL20 (RpL18A).